The sequence spans 370 residues: Cobalt-precorrin-5B C(1)-methyltransferase (370 aa).

This sequence belongs to the CbiD family.

The enzyme catalyses Co-precorrin-5B + S-adenosyl-L-methionine = Co-precorrin-6A + S-adenosyl-L-homocysteine. The protein operates within cofactor biosynthesis; adenosylcobalamin biosynthesis; cob(II)yrinate a,c-diamide from sirohydrochlorin (anaerobic route): step 6/10. Its function is as follows. Catalyzes the methylation of C-1 in cobalt-precorrin-5B to form cobalt-precorrin-6A. The polypeptide is Cobalt-precorrin-5B C(1)-methyltransferase (Pseudomonas syringae pv. syringae (strain B728a)).